The following is a 152-amino-acid chain: Ribonuclease H (152 aa).

An RNase H type-1 domain is found at Met1–Glu142. Asp10, Glu48, Asp70, and Asp134 together coordinate Mg(2+).

Belongs to the RNase H family. In terms of assembly, monomer. It depends on Mg(2+) as a cofactor.

The protein localises to the cytoplasm. It catalyses the reaction Endonucleolytic cleavage to 5'-phosphomonoester.. Its function is as follows. Endonuclease that specifically degrades the RNA of RNA-DNA hybrids. The chain is Ribonuclease H from Rickettsia massiliae (strain Mtu5).